The chain runs to 620 residues: Chaperone protein HscA homolog (620 aa).

The protein belongs to the heat shock protein 70 family.

Its function is as follows. Chaperone involved in the maturation of iron-sulfur cluster-containing proteins. Has a low intrinsic ATPase activity which is markedly stimulated by HscB. The polypeptide is Chaperone protein HscA homolog (Acinetobacter baylyi (strain ATCC 33305 / BD413 / ADP1)).